Reading from the N-terminus, the 251-residue chain is uncharacterized protein (251 aa).

Transmembrane regions (helical) follow at residues 56–76 (LAVV…TLVA), 104–124 (IITV…FLLT), 184–204 (HGFV…LIIV), and 208–228 (YLIA…ANIS).

The protein localises to the membrane. This is an uncharacterized protein from Caenorhabditis elegans.